Reading from the N-terminus, the 357-residue chain is Maleylacetate reductase 1 (357 aa).

This sequence belongs to the iron-containing alcohol dehydrogenase family.

It carries out the reaction 3-oxoadipate + NAD(+) = maleylacetate + NADH + H(+). The enzyme catalyses 3-oxoadipate + NADP(+) = maleylacetate + NADPH + H(+). It functions in the pathway aromatic compound metabolism; 3-chlorocatechol degradation. In terms of biological role, plays a major role in the degradation of chloroaromatic compounds by channeling maleylacetate and some of its substituted derivatives into the 3-oxoadipate pathway. This enzyme converts maleylacetate and 2-chloromaleylacetate with similar efficiencies. The protein is Maleylacetate reductase 1 (macA) of Rhodococcus opacus (Nocardia opaca).